A 236-amino-acid chain; its full sequence is MADS-box transcription factor 3 (236 aa).

One can recognise an MADS-box domain in the interval 1 to 61; the sequence is MGRGKIEIKR…GRLYEYANNS (61 aa). One can recognise a K-box domain in the interval 87-178; the sequence is AQHYQQESSK…RSKVVENERG (92 aa).

Expressed in lemmas, paleas and lodicules.

It is found in the nucleus. Its function is as follows. Probable transcription factor involved in the development of floral organs. Acts as C-class protein in association with MADS58. Involved in the control of lodicule number (whorl 2), stamen specification (whorl 3) and floral meristem determinacy (whorl 4), but not in the regulation of carpel morphogenesis. Plays a more predominant role in controlling lodicule development and in specifying stamen identity than MADS58. This is MADS-box transcription factor 3 (MADS3) from Oryza sativa subsp. japonica (Rice).